A 288-amino-acid chain; its full sequence is Acetylglutamate kinase (288 aa).

Substrate contacts are provided by residues 66–67 (GG), Arg88, and Asn182.

It belongs to the acetylglutamate kinase family. ArgB subfamily.

The protein localises to the cytoplasm. It catalyses the reaction N-acetyl-L-glutamate + ATP = N-acetyl-L-glutamyl 5-phosphate + ADP. It functions in the pathway amino-acid biosynthesis; L-arginine biosynthesis; N(2)-acetyl-L-ornithine from L-glutamate: step 2/4. Its function is as follows. Catalyzes the ATP-dependent phosphorylation of N-acetyl-L-glutamate. The chain is Acetylglutamate kinase from Brachyspira hyodysenteriae (strain ATCC 49526 / WA1).